A 90-amino-acid polypeptide reads, in one-letter code: Mitochondrial import inner membrane translocase subunit Tim10 (90 aa).

The Twin CX3C motif motif lies at 29 to 54; that stretch reads CHRKCVPPHYKEAELSKGESVCLDRC. 2 cysteine pairs are disulfide-bonded: cysteine 29-cysteine 54 and cysteine 33-cysteine 50.

It belongs to the small Tim family. As to quaternary structure, heterohexamer; composed of 3 copies of TIMM9 and 3 copies of TIMM10/TIM10A, named soluble 70 kDa complex. The complex forms a 6-bladed alpha-propeller structure and associates with the TIMM22 component of the TIM22 complex. Interacts with multi-pass transmembrane proteins in transit. Also forms a complex composed of TIMM9, TIMM10/TIM10A and FXC1/TIM10B.

The protein localises to the mitochondrion inner membrane. Its function is as follows. Mitochondrial intermembrane chaperone that participates in the import and insertion of multi-pass transmembrane proteins into the mitochondrial inner membrane. May also be required for the transfer of beta-barrel precursors from the TOM complex to the sorting and assembly machinery (SAM complex) of the outer membrane. Acts as a chaperone-like protein that protects the hydrophobic precursors from aggregation and guide them through the mitochondrial intermembrane space. The chain is Mitochondrial import inner membrane translocase subunit Tim10 (Timm10) from Rattus norvegicus (Rat).